The following is a 612-amino-acid chain: MSDPQMSMAATAAVSPSDYLQPAAATTQDSQPSPLALLAATCSKIGPPAVEAAVTPPAPPQPTPRKLVPIKPAPLPLSPCKNSFSILSSKGNILQIQGSQLSTSYPGGQFVFAIQNPTLINKGSRSNASIQYQVPQIQGNSSQTIQVQPSLTNQIQVIPGTNQAITTPSTSGHKPVPIKPAPVQKSSTTTTPVQSGANVVKLTGGGSNMTLTLPLNNLVNTSDIGGPAQLLTESPPTPLSKTNKKARKKSLPVSQPSVAVAEQVETVLIETTADNIIQAGNNLLIVQSPGGGQPAVVQQVQVVPPKAEQQQVVQIPQQALRVVQAASATLPTVPQKPSQNFQIQTTEPTPTQVYIRTPSGEVQTVLVQDSPPATAATTSTVTCNSPALRAPHLSGTSKKHSAAILRKERPLPKIAPAGSIISLNAAQLAAAAQAMQTININGVQVQGVPVTITNTGGQQQLTVQNVSGNNLTISGLSPTQIQLQMEQALAGEAQPGEKRRRMACTCPNCKDGEKRSGEQGKKKHVCHIPDCGKTFRKTSLLRAHVRLHTGERPFVCNWFFCGKRFTRSDELQRHARTHTGDKRFECAQCQKRFMRSDHLTKHYKTHLGTKGL.

Residue Ser78 is modified to Phosphoserine. Disordered regions lie at residues 166–195 and 226–250; these read TTPSTSGHKPVPIKPAPVQKSSTTTTPVQS and GPAQLLTESPPTPLSKTNKKARKKS. Over residues 184–195 the composition is skewed to polar residues; the sequence is QKSSTTTTPVQS. The 9aaTAD; inactive signature appears at 360 to 368; it reads GEVQTVLVQ. 3 C2H2-type zinc fingers span residues 524-548, 554-578, and 584-606; these read HVCHIPDCGKTFRKTSLLRAHVRLH, FVCNWFFCGKRFTRSDELQRHARTH, and FECAQCQKRFMRSDHLTKHYKTH.

Belongs to the Sp1 C2H2-type zinc-finger protein family.

The protein resides in the nucleus. Functionally, binds to GC box promoters elements and selectively activates mRNA synthesis from genes that contain functional recognition sites. The protein is Transcription factor Sp2 (Sp2) of Mus musculus (Mouse).